The sequence spans 157 residues: Protein Smg (157 aa).

This sequence belongs to the Smg family.

The sequence is that of Protein Smg from Shigella boydii serotype 4 (strain Sb227).